The following is a 322-amino-acid chain: Biotin synthase (322 aa).

Residues 39–266 (NQIQVSSLLN…KSVVRLSAGR (228 aa)) form the Radical SAM core domain. Positions 54, 58, and 61 each coordinate [4Fe-4S] cluster. The [2Fe-2S] cluster site is built by C98, C129, C189, and R261.

Belongs to the radical SAM superfamily. Biotin synthase family. Homodimer. Requires [4Fe-4S] cluster as cofactor. [2Fe-2S] cluster serves as cofactor.

The catalysed reaction is (4R,5S)-dethiobiotin + (sulfur carrier)-SH + 2 reduced [2Fe-2S]-[ferredoxin] + 2 S-adenosyl-L-methionine = (sulfur carrier)-H + biotin + 2 5'-deoxyadenosine + 2 L-methionine + 2 oxidized [2Fe-2S]-[ferredoxin]. It functions in the pathway cofactor biosynthesis; biotin biosynthesis; biotin from 7,8-diaminononanoate: step 2/2. Its function is as follows. Catalyzes the conversion of dethiobiotin (DTB) to biotin by the insertion of a sulfur atom into dethiobiotin via a radical-based mechanism. This chain is Biotin synthase, found in Ruthia magnifica subsp. Calyptogena magnifica.